The chain runs to 404 residues: S-adenosylmethionine synthase (404 aa).

139-144 (GKGSTD) is a binding site for ATP.

Belongs to the AdoMet synthase 2 family. Mg(2+) serves as cofactor.

The catalysed reaction is L-methionine + ATP + H2O = S-adenosyl-L-methionine + phosphate + diphosphate. It participates in amino-acid biosynthesis; S-adenosyl-L-methionine biosynthesis; S-adenosyl-L-methionine from L-methionine: step 1/1. Its function is as follows. Catalyzes the formation of S-adenosylmethionine from methionine and ATP. In Saccharolobus islandicus (strain Y.N.15.51 / Yellowstone #2) (Sulfolobus islandicus), this protein is S-adenosylmethionine synthase.